We begin with the raw amino-acid sequence, 206 residues long: Proteasome subunit beta 1 (206 aa).

The propeptide at 1–5 (MLMKG) is removed in mature form; by autocatalysis. Residue Thr6 is the Nucleophile of the active site.

The protein belongs to the peptidase T1B family. In terms of assembly, the 20S proteasome core is composed of 14 alpha and 14 beta subunits that assemble into four stacked heptameric rings, resulting in a barrel-shaped structure. The two inner rings, each composed of seven catalytic beta subunits, are sandwiched by two outer rings, each composed of seven alpha subunits. The catalytic chamber with the active sites is on the inside of the barrel. Has a gated structure, the ends of the cylinder being occluded by the N-termini of the alpha-subunits. Is capped at one or both ends by the proteasome regulatory ATPase, PAN.

The protein resides in the cytoplasm. It carries out the reaction Cleavage of peptide bonds with very broad specificity.. The formation of the proteasomal ATPase PAN-20S proteasome complex, via the docking of the C-termini of PAN into the intersubunit pockets in the alpha-rings, triggers opening of the gate for substrate entry. Interconversion between the open-gate and close-gate conformations leads to a dynamic regulation of the 20S proteasome proteolysis activity. Functionally, component of the proteasome core, a large protease complex with broad specificity involved in protein degradation. In Korarchaeum cryptofilum (strain OPF8), this protein is Proteasome subunit beta 1.